The primary structure comprises 807 residues: DNA gyrase subunit B (807 aa).

Residues Ser429 to Pro543 enclose the Toprim domain. The Mg(2+) site is built by Glu435, Asp508, and Asp510.

Belongs to the type II topoisomerase GyrB family. As to quaternary structure, heterotetramer, composed of two GyrA and two GyrB chains. In the heterotetramer, GyrA contains the active site tyrosine that forms a transient covalent intermediate with DNA, while GyrB binds cofactors and catalyzes ATP hydrolysis. Mg(2+) is required as a cofactor. Mn(2+) serves as cofactor. Requires Ca(2+) as cofactor.

It is found in the cytoplasm. It carries out the reaction ATP-dependent breakage, passage and rejoining of double-stranded DNA.. Its function is as follows. A type II topoisomerase that negatively supercoils closed circular double-stranded (ds) DNA in an ATP-dependent manner to modulate DNA topology and maintain chromosomes in an underwound state. Negative supercoiling favors strand separation, and DNA replication, transcription, recombination and repair, all of which involve strand separation. Also able to catalyze the interconversion of other topological isomers of dsDNA rings, including catenanes and knotted rings. Type II topoisomerases break and join 2 DNA strands simultaneously in an ATP-dependent manner. This is DNA gyrase subunit B from Rickettsia conorii (strain ATCC VR-613 / Malish 7).